Here is a 75-residue protein sequence, read N- to C-terminus: Small ribosomal subunit protein bS18 (75 aa).

It belongs to the bacterial ribosomal protein bS18 family. In terms of assembly, part of the 30S ribosomal subunit. Forms a tight heterodimer with protein bS6.

Functionally, binds as a heterodimer with protein bS6 to the central domain of the 16S rRNA, where it helps stabilize the platform of the 30S subunit. In Mycoplasma capricolum subsp. capricolum (strain California kid / ATCC 27343 / NCTC 10154), this protein is Small ribosomal subunit protein bS18.